The sequence spans 289 residues: tRNA-cytidine(32) 2-sulfurtransferase (289 aa).

The PP-loop motif signature appears at 49–54 (SGGKDS). Cys124, Cys127, and Cys215 together coordinate [4Fe-4S] cluster.

The protein belongs to the TtcA family. Homodimer. It depends on Mg(2+) as a cofactor. [4Fe-4S] cluster is required as a cofactor.

It localises to the cytoplasm. It carries out the reaction cytidine(32) in tRNA + S-sulfanyl-L-cysteinyl-[cysteine desulfurase] + AH2 + ATP = 2-thiocytidine(32) in tRNA + L-cysteinyl-[cysteine desulfurase] + A + AMP + diphosphate + H(+). It participates in tRNA modification. Functionally, catalyzes the ATP-dependent 2-thiolation of cytidine in position 32 of tRNA, to form 2-thiocytidine (s(2)C32). The sulfur atoms are provided by the cysteine/cysteine desulfurase (IscS) system. This is tRNA-cytidine(32) 2-sulfurtransferase from Methylococcus capsulatus (strain ATCC 33009 / NCIMB 11132 / Bath).